The sequence spans 267 residues: Diacetylchitobiose deacetylase (267 aa).

The protein belongs to the PIGL family. In terms of assembly, homohexamer.

Its subcellular location is the cytoplasm. The enzyme catalyses N,N'-diacetylchitobiose + H2O = beta-D-glucosaminyl-(1-&gt;4)-N-acetyl-D-glucosamine + acetate. It functions in the pathway glycan degradation; chitin degradation. Functionally, deacylates the non-reducing end of diacetylchitobiose (GlcNAc2). Can also use N-acetylglucosamine (GlcNAc) and N-acetylchitotriose (GlcNAc3). Probably involved in chitin degradation. The sequence is that of Diacetylchitobiose deacetylase (dac) from Thermococcus kodakarensis (strain ATCC BAA-918 / JCM 12380 / KOD1) (Pyrococcus kodakaraensis (strain KOD1)).